Consider the following 142-residue polypeptide: AP-2 complex subunit sigma (142 aa).

The protein belongs to the adaptor complexes small subunit family. Adaptor protein complex 2 (AP-2) is a heterotetramer composed of two large adaptins (alpha-type and beta-type subunits), a medium adaptin (mu-type subunit AP50) and a small adaptin (sigma-type subunit AP17).

Its subcellular location is the cell membrane. The protein localises to the membrane. The protein resides in the coated pit. Component of the adaptor complexes which link clathrin to receptors in coated vesicles. Clathrin-associated protein complexes are believed to interact with the cytoplasmic tails of membrane proteins, leading to their selection and concentration. The polypeptide is AP-2 complex subunit sigma (ap2s1) (Dictyostelium discoideum (Social amoeba)).